A 428-amino-acid chain; its full sequence is Adenylosuccinate synthetase (428 aa).

GTP-binding positions include 12 to 18 (GDEGKGK) and 40 to 42 (GHT). Asp-13 (proton acceptor) is an active-site residue. 2 residues coordinate Mg(2+): Asp-13 and Gly-40. Residues 13 to 16 (DEGK), 38 to 41 (NAGH), Thr-128, Arg-142, Gln-223, Thr-238, and Arg-302 contribute to the IMP site. The active-site Proton donor is the His-41. Position 298 to 304 (298 to 304 (TTTGRPR)) interacts with substrate. GTP-binding positions include Arg-304, 330–332 (SID), and 412–414 (SVG).

This sequence belongs to the adenylosuccinate synthetase family. As to quaternary structure, homodimer. Mg(2+) serves as cofactor.

It localises to the cytoplasm. The enzyme catalyses IMP + L-aspartate + GTP = N(6)-(1,2-dicarboxyethyl)-AMP + GDP + phosphate + 2 H(+). Its pathway is purine metabolism; AMP biosynthesis via de novo pathway; AMP from IMP: step 1/2. Plays an important role in the de novo pathway of purine nucleotide biosynthesis. Catalyzes the first committed step in the biosynthesis of AMP from IMP. The polypeptide is Adenylosuccinate synthetase (Geobacillus sp. (strain WCH70)).